The following is a 126-amino-acid chain: Fluoride-specific ion channel FluC (126 aa).

4 consecutive transmembrane segments (helical) span residues Phe-3 to Val-23, Ile-37 to Val-57, Val-70 to Val-90, and Asn-104 to Met-124. Gly-77 and Thr-80 together coordinate Na(+).

This sequence belongs to the fluoride channel Fluc/FEX (TC 1.A.43) family.

The protein resides in the cell inner membrane. It catalyses the reaction fluoride(in) = fluoride(out). Na(+) is not transported, but it plays an essential structural role and its presence is essential for fluoride channel function. Its function is as follows. Fluoride-specific ion channel. Important for reducing fluoride concentration in the cell, thus reducing its toxicity. In Vibrio cholerae serotype O1 (strain ATCC 39541 / Classical Ogawa 395 / O395), this protein is Fluoride-specific ion channel FluC.